The chain runs to 206 residues: RNA pyrophosphohydrolase (206 aa).

A Nudix hydrolase domain is found at 6-150 (GYRPNVGIVI…KRDVYRKVMK (145 aa)). The Nudix box signature appears at 38–59 (GGINEGENIETAMYRELYEEVG). The segment covering 162–191 (KPETVEKPRVERTEKRDFQKRDNQKREFRK) has biased composition (basic and acidic residues). The interval 162-206 (KPETVEKPRVERTEKRDFQKRDNQKREFRKSARMWNNSHQKGKAQ) is disordered.

Belongs to the Nudix hydrolase family. RppH subfamily. The cofactor is a divalent metal cation.

Its function is as follows. Accelerates the degradation of transcripts by removing pyrophosphate from the 5'-end of triphosphorylated RNA, leading to a more labile monophosphorylated state that can stimulate subsequent ribonuclease cleavage. The protein is RNA pyrophosphohydrolase of Actinobacillus pleuropneumoniae serotype 7 (strain AP76).